Here is a 196-residue protein sequence, read N- to C-terminus: Potassium-transporting ATPase KdpC subunit (196 aa).

Residues 7 to 27 (PALVLFFVLTLLTGVAYPLAV) form a helical membrane-spanning segment.

It belongs to the KdpC family. The system is composed of three essential subunits: KdpA, KdpB and KdpC.

Its subcellular location is the cell inner membrane. Functionally, part of the high-affinity ATP-driven potassium transport (or Kdp) system, which catalyzes the hydrolysis of ATP coupled with the electrogenic transport of potassium into the cytoplasm. This subunit acts as a catalytic chaperone that increases the ATP-binding affinity of the ATP-hydrolyzing subunit KdpB by the formation of a transient KdpB/KdpC/ATP ternary complex. The polypeptide is Potassium-transporting ATPase KdpC subunit (Polaromonas naphthalenivorans (strain CJ2)).